A 331-amino-acid polypeptide reads, in one-letter code: Protein MGF 300-4L (331 aa).

It belongs to the asfivirus MGF 300 family.

This African swine fever virus (isolate Tick/Malawi/Lil 20-1/1983) (ASFV) protein is Protein MGF 300-4L.